Consider the following 513-residue polypeptide: MTRVINLDGESLTIEDVIAIARQGVACHIDDSAIEAVNASRKIVDDIVSEKRVVYGVTTGFGSLCNVSISPEDTVQLQENLIRTHASGFGDPLPEDAVRAIMLIRINSLVKGYSGIRLSTIEKLLELLNKGVHPYIPEKGSLGASGDLAPLAHMVLPMLGLGKAYYKGELLSGQEALDKAGIDKISLAAKEGLALINGTTVLTAVGALATYDAIQLLKLSDLAGALSLEVHNGITSPFEENLHTIRPQSGQLATARNIRNLLEGSQNTTVATQSRVQDPYTLRCMPQIHGASKDSIAYVKSKVDIEINSVTDNPIICKDGHVISGGNFHGEPMAQPFDFLGIAISEIGNVSERRVERLVNSQLSKLPSFLVKYPGLNSGFMITQYACASLASENKVLAHPASVDSIPSCENQEDFVSMGTTAARKAFEILKNSRRIVATEIMAACQALDLKPENHELGKGTKVAYDLFRKEVNFIEHDKHIEIYDELNKASAVIEDPSFLEAVEQAVELSIQF.

Residues 144 to 146 (ASG) constitute a cross-link (5-imidazolinone (Ala-Gly)). Position 145 is a 2,3-didehydroalanine (Ser) (Ser145).

The protein belongs to the PAL/histidase family. Contains an active site 4-methylidene-imidazol-5-one (MIO), which is formed autocatalytically by cyclization and dehydration of residues Ala-Ser-Gly.

It is found in the cytoplasm. It catalyses the reaction L-histidine = trans-urocanate + NH4(+). The protein operates within amino-acid degradation; L-histidine degradation into L-glutamate; N-formimidoyl-L-glutamate from L-histidine: step 1/3. The chain is Histidine ammonia-lyase from Streptococcus pyogenes serotype M1.